Reading from the N-terminus, the 198-residue chain is V-type ATP synthase subunit E 1 (198 aa).

It belongs to the V-ATPase E subunit family.

Functionally, produces ATP from ADP in the presence of a proton gradient across the membrane. The chain is V-type ATP synthase subunit E 1 from Clostridium tetani (strain Massachusetts / E88).